A 351-amino-acid chain; its full sequence is Protein RecA (351 aa).

Residue 68–75 (GPESSGKT) participates in ATP binding.

The protein belongs to the RecA family.

The protein resides in the cytoplasm. Can catalyze the hydrolysis of ATP in the presence of single-stranded DNA, the ATP-dependent uptake of single-stranded DNA by duplex DNA, and the ATP-dependent hybridization of homologous single-stranded DNAs. It interacts with LexA causing its activation and leading to its autocatalytic cleavage. This chain is Protein RecA, found in Chloroflexus aurantiacus (strain ATCC 29364 / DSM 637 / Y-400-fl).